A 96-amino-acid polypeptide reads, in one-letter code: Large ribosomal subunit protein uL23 (96 aa).

It belongs to the universal ribosomal protein uL23 family. In terms of assembly, part of the 50S ribosomal subunit. Contacts protein L29, and trigger factor when it is bound to the ribosome.

In terms of biological role, one of the early assembly proteins it binds 23S rRNA. One of the proteins that surrounds the polypeptide exit tunnel on the outside of the ribosome. Forms the main docking site for trigger factor binding to the ribosome. This is Large ribosomal subunit protein uL23 from Thermus thermophilus (strain ATCC BAA-163 / DSM 7039 / HB27).